The primary structure comprises 205 residues: Putative 3-methyladenine DNA glycosylase (205 aa).

The protein belongs to the DNA glycosylase MPG family.

This chain is Putative 3-methyladenine DNA glycosylase, found in Clostridium perfringens (strain SM101 / Type A).